The primary structure comprises 615 residues: Protein DlpA (615 aa).

This sequence belongs to the isocitrate and isopropylmalate dehydrogenases family. To M.jannaschii MJ0644 in the C-terminal section.

This is Protein DlpA (dlpA) from Legionella pneumophila subsp. pneumophila (strain Philadelphia 1 / ATCC 33152 / DSM 7513).